The following is a 333-amino-acid chain: ATP synthase subunit a (333 aa).

A signal peptide spans 1-32 (MIYLHNKRKGMLKRLSALIVIGLLMNLPAVFA). Helical transmembrane passes span 100-120 (HVVMMWIAAAILLLIMFGVGN), 161-181 (FMPFLLTIFFFILVCNLIGLV), 185-205 (ATATGNINVTATLAIFTFLVT), 229-249 (LMWIIMVPVEFIGLFTKPFAL), 254-274 (FANMTAGHIVIISLLGLIFVF), 279-299 (IAPVSVAFALFIYLLEILVAF), and 300-320 (LQAYIFTLLSALFIGMAVAHE).

This sequence belongs to the ATPase A chain family. F-type ATPases have 2 components, CF(1) - the catalytic core - and CF(0) - the membrane proton channel. CF(1) has five subunits: alpha(3), beta(3), gamma(1), delta(1), epsilon(1). CF(0) has four main subunits: a, b, b' and c.

Its subcellular location is the cell inner membrane. Functionally, key component of the proton channel; it plays a direct role in the translocation of protons across the membrane. The sequence is that of ATP synthase subunit a from Chloroherpeton thalassium (strain ATCC 35110 / GB-78).